The chain runs to 169 residues: Oleosin Ara h 10.0101 (169 aa).

2 helical membrane passes run Val-39–Ala-59 and Leu-73–Ala-93. Positions Lys-146–Gly-156 are enriched in basic and acidic residues. Positions Lys-146–Thr-169 are disordered.

Belongs to the oleosin family. In terms of tissue distribution, expressed in seeds (at protein level).

Its subcellular location is the lipid droplet. The protein localises to the membrane. Its function is as follows. May have a structural role to stabilize the lipid body during desiccation of the seed by preventing coalescence of the oil. Probably interacts with both lipid and phospholipid moieties of lipid bodies. May also provide recognition signals for specific lipase anchorage in lipolysis during seedling growth. The protein is Oleosin Ara h 10.0101 of Arachis hypogaea (Peanut).